The following is a 260-amino-acid chain: Emerin (260 aa).

Methionine 1 is subject to N-acetylmethionine. Residues methionine 1–arginine 45 form the LEM domain. Residues serine 8 and serine 29 each carry the phosphoserine modification. The segment at arginine 46–glutamine 224 is interaction with F-actin. Serine 49 is subject to Phosphoserine; by PKA. Serine 54, serine 69, serine 72, serine 88, serine 99, serine 142, serine 143, and serine 144 each carry phosphoserine. At tyrosine 162 the chain carries Phosphotyrosine. Residues arginine 169–serine 188 are interaction with CTNNB1. 3 positions are modified to phosphoserine: serine 172, serine 175, and serine 177. The segment at tyrosine 184 to arginine 206 is disordered. The span at serine 187–serine 201 shows a compositional bias: low complexity. Residues valine 225–tyrosine 245 traverse the membrane as a helical segment.

As to quaternary structure, interacts with lamins A and C, BANF1, GMCL, BCLAF1 and YTHDC1/YT521. Interacts with TMEM43; the interaction retains emerin in the inner nuclear membrane. Interacts with ACTB, SPTAN1, F-actin, CTNNB1 and beta-tubulin. Interacts with SUN1 and SUN2. Interacts with TMEM201. Interacts with NEMP1.

It localises to the nucleus inner membrane. The protein resides in the nucleus outer membrane. Its function is as follows. Stabilizes and promotes the formation of a nuclear actin cortical network. Stimulates actin polymerization in vitro by binding and stabilizing the pointed end of growing filaments. Inhibits beta-catenin activity by preventing its accumulation in the nucleus. Acts by influencing the nuclear accumulation of beta-catenin through a CRM1-dependent export pathway. Links centrosomes to the nuclear envelope via a microtubule association. Required for proper localization of non-farnesylated prelamin-A/C. Together with NEMP1, contributes to nuclear envelope stiffness in germ cells. The chain is Emerin (Emd) from Rattus norvegicus (Rat).